A 277-amino-acid chain; its full sequence is S-formylglutathione hydrolase FrmB (277 aa).

Catalysis depends on charge relay system residues S145, D221, and H254.

Belongs to the esterase D family.

The catalysed reaction is S-formylglutathione + H2O = formate + glutathione + H(+). Serine hydrolase involved in the detoxification of formaldehyde. Hydrolyzes S-formylglutathione to glutathione and formate. This is S-formylglutathione hydrolase FrmB (frmB) from Escherichia coli O9:H4 (strain HS).